Here is a 428-residue protein sequence, read N- to C-terminus: Sulfite exporter TauE/SafE family protein 6 (428 aa).

11 helical membrane-spanning segments follow: residues 1–21 (MKTLFVLFILILCVFAINANQ), 61–81 (ALVVAGVLCFTAALISSASGI), 82–102 (GDGFFFIPIMNLVAGIDLKAA), 105–125 (FSAFMVTGGSIANLINNHFGC), 128–148 (LIDYDLALLLEPCMLLGVSVG), 149–169 (VICNKVFPEWLITGLFVVFLM), 245–265 (YWILLSLQIPLALVFTILALS), 294–314 (VMSFLAGLLGGIFGIGGGMII), 332–352 (TSFMVFFSATMSGVQYLLLGM), 356–376 (EAAYVFSVICFFASTLGLVFA), and 388–408 (IIVFLVGTMMYLTTIVMASFG).

The protein belongs to the 4-toluene sulfonate uptake permease (TSUP) (TC 2.A.102) family.

It localises to the membrane. In Arabidopsis thaliana (Mouse-ear cress), this protein is Sulfite exporter TauE/SafE family protein 6.